The following is a 196-amino-acid chain: Putative HTH-type transcriptional regulator protein PtxE (196 aa).

The region spanning 1 to 59 is the HTH lysR-type domain; sequence MLNPVWLKSLVAIVQTGSFQSAARALGLAQPTVSQHLQKLEEQVGVTLVQRSRSGCQPT. Positions 19–38 form a DNA-binding region, H-T-H motif; it reads FQSAARALGLAQPTVSQHLQ.

The protein belongs to the LysR transcriptional regulatory family.

The protein is Putative HTH-type transcriptional regulator protein PtxE (ptxE) of Stutzerimonas stutzeri (Pseudomonas stutzeri).